The chain runs to 144 residues: Large ribosomal subunit protein uL15 (144 aa).

The tract at residues 1–52 (MRLNTLSPAAGSKPSKKRVGRGIGSGLGKTGGRGHKGQKSRSGGKVRAGFEG) is disordered. A compositionally biased stretch (gly residues) spans 21–31 (RGIGSGLGKTG). A compositionally biased stretch (basic residues) spans 32–44 (GRGHKGQKSRSGG).

The protein belongs to the universal ribosomal protein uL15 family. Part of the 50S ribosomal subunit.

In terms of biological role, binds to the 23S rRNA. In Aliivibrio fischeri (strain ATCC 700601 / ES114) (Vibrio fischeri), this protein is Large ribosomal subunit protein uL15.